Here is a 499-residue protein sequence, read N- to C-terminus: BTB/POZ domain-containing protein At5g60050 (499 aa).

Positions 18-30 (PSLSFSPSRISSP) are enriched in low complexity. Residues 18–57 (PSLSFSPSRISSPIKLSTASPPLPPPPPPPPNESTLSNPT) are disordered. A compositionally biased stretch (pro residues) spans 38-49 (PPLPPPPPPPPN). Residues 99 to 172 (GDVKLTVVGK…MYSDDLKKKL (74 aa)) enclose the BTB domain.

It functions in the pathway protein modification; protein ubiquitination. In terms of biological role, may act as a substrate-specific adapter of an E3 ubiquitin-protein ligase complex (CUL3-RBX1-BTB) which mediates the ubiquitination and subsequent proteasomal degradation of target proteins. The protein is BTB/POZ domain-containing protein At5g60050 of Arabidopsis thaliana (Mouse-ear cress).